We begin with the raw amino-acid sequence, 325 residues long: Acetyl-coenzyme A carboxylase carboxyl transferase subunit alpha (325 aa).

The 258-residue stretch at 35-292 (EINKLEARLE…DDVLKRSLRE (258 aa)) folds into the CoA carboxyltransferase C-terminal domain.

Belongs to the AccA family. As to quaternary structure, acetyl-CoA carboxylase is a heterohexamer composed of biotin carboxyl carrier protein (AccB), biotin carboxylase (AccC) and two subunits each of ACCase subunit alpha (AccA) and ACCase subunit beta (AccD).

The protein localises to the cytoplasm. The enzyme catalyses N(6)-carboxybiotinyl-L-lysyl-[protein] + acetyl-CoA = N(6)-biotinyl-L-lysyl-[protein] + malonyl-CoA. It participates in lipid metabolism; malonyl-CoA biosynthesis; malonyl-CoA from acetyl-CoA: step 1/1. Functionally, component of the acetyl coenzyme A carboxylase (ACC) complex. First, biotin carboxylase catalyzes the carboxylation of biotin on its carrier protein (BCCP) and then the CO(2) group is transferred by the carboxyltransferase to acetyl-CoA to form malonyl-CoA. This chain is Acetyl-coenzyme A carboxylase carboxyl transferase subunit alpha, found in Anoxybacillus flavithermus (strain DSM 21510 / WK1).